Reading from the N-terminus, the 377-residue chain is Succinyl-diaminopimelate desuccinylase (377 aa).

Position 68 (His68) interacts with Zn(2+). The active site involves Asp70. Asp101 lines the Zn(2+) pocket. The Proton acceptor role is filled by Glu135. Glu136, Glu164, and His350 together coordinate Zn(2+).

The protein belongs to the peptidase M20A family. DapE subfamily. Homodimer. Requires Zn(2+) as cofactor. Co(2+) serves as cofactor.

The catalysed reaction is N-succinyl-(2S,6S)-2,6-diaminopimelate + H2O = (2S,6S)-2,6-diaminopimelate + succinate. It participates in amino-acid biosynthesis; L-lysine biosynthesis via DAP pathway; LL-2,6-diaminopimelate from (S)-tetrahydrodipicolinate (succinylase route): step 3/3. Catalyzes the hydrolysis of N-succinyl-L,L-diaminopimelic acid (SDAP), forming succinate and LL-2,6-diaminopimelate (DAP), an intermediate involved in the bacterial biosynthesis of lysine and meso-diaminopimelic acid, an essential component of bacterial cell walls. This Acinetobacter baylyi (strain ATCC 33305 / BD413 / ADP1) protein is Succinyl-diaminopimelate desuccinylase.